The following is a 141-amino-acid chain: Large ribosomal subunit protein uL11 (141 aa).

This sequence belongs to the universal ribosomal protein uL11 family. Part of the ribosomal stalk of the 50S ribosomal subunit. Interacts with L10 and the large rRNA to form the base of the stalk. L10 forms an elongated spine to which L12 dimers bind in a sequential fashion forming a multimeric L10(L12)X complex. One or more lysine residues are methylated.

Forms part of the ribosomal stalk which helps the ribosome interact with GTP-bound translation factors. The chain is Large ribosomal subunit protein uL11 from Streptococcus pneumoniae serotype 2 (strain D39 / NCTC 7466).